Here is a 579-residue protein sequence, read N- to C-terminus: General transcriptional corepressor tupA (579 aa).

Polar residues predominate over residues N83–S101. The disordered stretch occupies residues N83–W258. Composition is skewed to low complexity over residues N109–N128, Q157–L198, and M207–N224. The span at K227–T256 shows a compositional bias: basic and acidic residues. WD repeat units follow at residues Q279–V319, D325–T364, G367–T406, G413–R452, G455–R494, G501–M540, and G543–S579.

It belongs to the WD repeat TUP1 family. As to quaternary structure, associates with trfA to form the trfA-tupA corepressor complex.

It localises to the nucleus. Its function is as follows. Acts as a component of the trfA-tupA corepressor complex which is involved in the repression of many genes in a wide variety of physiological processes. May also be involved in the derepression of at least some target genes. The complex is recruited to target genes by interaction with DNA-bound transcriptional repressors. The complex recruits histone deacetylases to produce a repressive chromatin structure, interacts with hypoacetylated N-terminal tails of histones H3 and H4 that have been programmed for repression by the action of histone deacetylases and interferes directly with the transcriptional machinery by associating with the RNA polymerase II mediator complex. The chain is General transcriptional corepressor tupA (tupA) from Dictyostelium discoideum (Social amoeba).